A 152-amino-acid polypeptide reads, in one-letter code: Large-conductance mechanosensitive channel (152 aa).

The next 2 membrane-spanning stretches (helical) occupy residues 14 to 34 (VIDLAIGVIIGGAFGKIVTSL) and 81 to 101 (GLFLNNLINFLIIAFSIFIAI).

This sequence belongs to the MscL family. Homopentamer.

It localises to the cell membrane. Its function is as follows. Channel that opens in response to stretch forces in the membrane lipid bilayer. May participate in the regulation of osmotic pressure changes within the cell. The sequence is that of Large-conductance mechanosensitive channel from Clostridium perfringens (strain 13 / Type A).